A 321-amino-acid chain; its full sequence is Beta-lactamase (321 aa).

The first 30 residues, 1-30 (MEKNRKKQIVVLSIALVCIFILVFSLFHKS), serve as a signal peptide directing secretion. Catalysis depends on Ser-83, which acts as the Acyl-ester intermediate. 233–235 (KTG) contacts substrate.

It belongs to the class-A beta-lactamase family.

The enzyme catalyses a beta-lactam + H2O = a substituted beta-amino acid. With respect to regulation, inhibited by clavulanic acid. In terms of biological role, can hydrolyze cephalosporins, penicillins and also cefoxitin; but at a slow rate. This chain is Beta-lactamase (cfxA), found in Phocaeicola vulgatus (Bacteroides vulgatus).